A 378-amino-acid chain; its full sequence is Chaperone protein DnaJ (378 aa).

A J domain is found at Asp5–Gly70. The segment at Gly135–Thr213 adopts a CR-type zinc-finger fold. Zn(2+) is bound by residues Cys148, Cys151, Cys165, Cys168, Cys187, Cys190, Cys201, and Cys204. CXXCXGXG motif repeat units follow at residues Cys148–Gly155, Cys165–Gly172, Cys187–Gly194, and Cys201–Gly208.

Belongs to the DnaJ family. As to quaternary structure, homodimer. Requires Zn(2+) as cofactor.

It localises to the cytoplasm. Participates actively in the response to hyperosmotic and heat shock by preventing the aggregation of stress-denatured proteins and by disaggregating proteins, also in an autonomous, DnaK-independent fashion. Unfolded proteins bind initially to DnaJ; upon interaction with the DnaJ-bound protein, DnaK hydrolyzes its bound ATP, resulting in the formation of a stable complex. GrpE releases ADP from DnaK; ATP binding to DnaK triggers the release of the substrate protein, thus completing the reaction cycle. Several rounds of ATP-dependent interactions between DnaJ, DnaK and GrpE are required for fully efficient folding. Also involved, together with DnaK and GrpE, in the DNA replication of plasmids through activation of initiation proteins. This is Chaperone protein DnaJ from Glaesserella parasuis serovar 5 (strain SH0165) (Haemophilus parasuis).